The chain runs to 2197 residues: RNA1 polyprotein (2197 aa).

Residues 621–1167 (GLTDVFGVPL…YDWVYANGGK (547 aa)) lie on the Cytoplasmic side of the membrane. Residues 766-933 (VKRLSDLHKR…EGVAYNPSDP (168 aa)) enclose the SF3 helicase domain. 796–803 (GGPRCGKS) is a binding site for ATP. The helical transmembrane segment at 1168–1188 (LLLVLAAVILILFFGSACIKL) threads the bilayer. The Lumenal portion of the chain corresponds to 1189 to 1212 (MQAIFCGAAGGTVSMAAVGKMTVQ). Residue Asn1228 is glycosylated (N-linked (GlcNAc...) asparagine; by host). Residues 1243-1475 (LAEAQFNESH…MPRYISHASF (233 aa)) form the Peptidase C3 domain. Residues His1283, Glu1331, and Cys1433 each act as for picornain 3C-like protease activity in the active site. Residues 1765 to 1888 (SVALNCDYSR…SIKPDTMKYF (124 aa)) form the RdRp catalytic domain.

The protein belongs to the nepoviruses RNA1 polyprotein family. Specific enzymatic cleavages by picornain 3C-like protease in vivo yield mature proteins. Picornain 3C-like protease is autocatalytically processed. NTB exists as NTB-VPg polyprotein as well as NTB mature protein. Post-translationally, VPg is uridylylated by the polymerase and is covalently linked to the 5'-end of genomic RNA. This uridylylated form acts as a nucleotide-peptide primer for the polymerase.

The protein resides in the host endoplasmic reticulum lumen. It localises to the host endoplasmic reticulum membrane. It carries out the reaction RNA(n) + a ribonucleoside 5'-triphosphate = RNA(n+1) + diphosphate. In terms of biological role, picornain 3C-like protease is a thiol protease that cleaves at Gln-|-Gly or Gln-|-Ser sites in the P1 and P2 polyproteins. Its function is as follows. The VPg-NTB polyprotein may act as a membrane-anchor for the replication complex. The protein is RNA1 polyprotein of Tomato ringspot virus (isolate raspberry) (ToRSV).